A 408-amino-acid polypeptide reads, in one-letter code: Glutamate N-acetyltransferase (408 aa).

The substrate site is built by threonine 150, lysine 176, threonine 189, glutamate 271, asparagine 403, and threonine 408. Residue threonine 189 is the Nucleophile of the active site.

The protein belongs to the ArgJ family. Heterotetramer of two alpha and two beta chains.

Its subcellular location is the cytoplasm. It catalyses the reaction N(2)-acetyl-L-ornithine + L-glutamate = N-acetyl-L-glutamate + L-ornithine. Its pathway is amino-acid biosynthesis; L-arginine biosynthesis; L-ornithine and N-acetyl-L-glutamate from L-glutamate and N(2)-acetyl-L-ornithine (cyclic): step 1/1. Catalyzes the transfer of the acetyl group from N(2)-acetylornithine to glutamate, forming N-acetylglutamate and L-ornithine. This is Glutamate N-acetyltransferase from Methanococcus maripaludis (strain C7 / ATCC BAA-1331).